We begin with the raw amino-acid sequence, 381 residues long: Chaperone protein DnaJ (381 aa).

The 69-residue stretch at 5–73 folds into the J domain; it reads DYYEVLGVGK…EKKAAYDQYG (69 aa). The CR-type zinc finger occupies 141–219; it reads GHEAQIRVPH…CHGQGKLKSQ (79 aa). Zn(2+) contacts are provided by Cys154, Cys157, Cys171, Cys174, Cys193, Cys196, Cys207, and Cys210. CXXCXGXG motif repeat units follow at residues 154–161, 171–178, 193–200, and 207–214; these read CDHCHGNG, CPTCHGAG, CPKCHGSG, and CTKCHGQG. The tract at residues 357 to 381 is disordered; the sequence is SVHEGGSRHSPQEQSWLDKVKSFFS.

It belongs to the DnaJ family. In terms of assembly, homodimer. Zn(2+) serves as cofactor.

The protein resides in the cytoplasm. In terms of biological role, participates actively in the response to hyperosmotic and heat shock by preventing the aggregation of stress-denatured proteins and by disaggregating proteins, also in an autonomous, DnaK-independent fashion. Unfolded proteins bind initially to DnaJ; upon interaction with the DnaJ-bound protein, DnaK hydrolyzes its bound ATP, resulting in the formation of a stable complex. GrpE releases ADP from DnaK; ATP binding to DnaK triggers the release of the substrate protein, thus completing the reaction cycle. Several rounds of ATP-dependent interactions between DnaJ, DnaK and GrpE are required for fully efficient folding. Also involved, together with DnaK and GrpE, in the DNA replication of plasmids through activation of initiation proteins. This chain is Chaperone protein DnaJ, found in Cupriavidus necator (strain ATCC 17699 / DSM 428 / KCTC 22496 / NCIMB 10442 / H16 / Stanier 337) (Ralstonia eutropha).